A 178-amino-acid polypeptide reads, in one-letter code: Fibroin heavy chain (178 aa).

A signal peptide spans 1-21 (MRVKTFVILCCALQYVAYTNA). Residues 149–178 (AVGAGAGAGAAAGSGAGAGAGYGAASGAGA) form a highly repetitive region.

As to quaternary structure, silk fibroin elementary unit consists in a disulfide-linked heavy and light chain and a p25 glycoprotein in molar ratios of 6:6:1. This results in a complex of approximately 2.3 MDa. Post-translationally, the interchain disulfide bridge is essential for the intracellular transport and secretion of fibroin. As to expression, produced exclusively in the posterior (PSG) section of silk glands, which are essentially modified salivary glands.

Its function is as follows. Core component of the silk filament; a strong, insoluble and chemically inert fiber. This is Fibroin heavy chain (FIBH) from Bombyx mandarina (Wild silk moth).